The primary structure comprises 516 residues: Flagellar radial spoke protein 3 (516 aa).

Polar residues-rich tracts occupy residues 1 to 11 (MVQAKAQQQLY) and 62 to 74 (ATQT…SPAS). Disordered regions lie at residues 1-32 (MVQA…EDET), 60-90 (ADAT…TPEA), 388-412 (NAKW…AAEE), and 424-447 (AAAE…DGVE). The segment covering 391–412 (WEADKAEAAEKARAEAEAAAEE) has biased composition (basic and acidic residues).

Belongs to the flagellar radial spoke RSP3 family. Interacts with FAP91. Protein 3 is one of the 5 radial spoke proteins that are phosphorylated. In terms of processing, protein 3a might only differ from protein 3 in being unphosphorylated.

The protein resides in the cytoplasm. The protein localises to the cytoskeleton. Its subcellular location is the flagellum axoneme. Protein 3 may attach the radial spoke to the outer doublet microtubule or is required to form a stable spoke structure. Its function is as follows. Flagellar radial spokes contribute to the regulation of dynein arm activity and thus the pattern of flagellar bending. They consist of a thin stalk, which is attached to the a subfiber of the outer doublet microtubule, and a bulbous head, which is attached to the stalk and appears to interact with the projections from the central pair of microtubules. The protein is Flagellar radial spoke protein 3 of Chlamydomonas reinhardtii (Chlamydomonas smithii).